The primary structure comprises 1530 residues: Coiled-coil domain-containing protein 141 (1530 aa).

Thr91 carries the post-translational modification Phosphothreonine. Coiled coils occupy residues 642–706, 758–783, and 861–970; these read VKNE…EALM, VKEK…QDYE, and SNVS…KTSD. The tract at residues 1210–1241 is disordered; that stretch reads SPDDISLPPLPGSPESPLAPSDMEVEEPVSSS. In terms of domain architecture, Ig-like spans 1409–1530; that stretch reads PNFSRLLSNV…VSLMYWLLTQ (122 aa).

As to quaternary structure, interacts with DISC1. Interacts preferentially with phosphorylated forms of myosin regulatory light chain (MRLC). Interacts (via the N-terminal region) with HDAC6; inhibits the deacetylase activity of HDAC6. Interacts with KIBRA (via the C-terminal region); retains AMPAR in the cytosol after internalization. In terms of processing, ubiquitinated and degradated by the CDC20-APC/C pathway. During brain development, CDC20-APC/C complex degrades CCDC141 after centrosome translocation into the dilated area. CCDC141 is restabilized in the dilation until the centrosome enters the dilation, at which point it is once again immediately destabilized by CDC20-APC/C complex. The oscillatory regulation of CCDC141 protein is needed for proper cortical migration. Post-translationally, phosphorylation at Thr-91 by PLK1 affects CCDC141 degradation.

Its subcellular location is the cytoplasm. It localises to the cytoskeleton. The protein resides in the microtubule organizing center. It is found in the centrosome. Plays a critical role in cortical radial and GnRH neurons migration during brain development. Regulates cortical radial migration by negatively controlling the activity of histone deacetylase 6 (HDAC6) and promotes centrosome maturation. CAMDI is required for dilation formation of cortical neurons during radial migration. Plays a critical role in learning and memory performance through regulation of AMPA-selective glutamate receptors (AMPARs) cell surface expression in competition with KIBRA. In Homo sapiens (Human), this protein is Coiled-coil domain-containing protein 141 (CCDC141).